The chain runs to 261 residues: 3-hydroxyacyl-CoA dehydrogenase type-2 (261 aa).

Ala2 is modified (N-acetylalanine). Ser20, Leu22, and Asp41 together coordinate NAD(+). At Lys53 the chain carries N6-acetyllysine; alternate. Residue Lys53 is modified to N6-succinyllysine; alternate. Residues Asp64 and Val65 each coordinate NAD(+). Lys69 bears the N6-acetyllysine mark. Cys91 is an NAD(+) binding site. N6-acetyllysine occurs at positions 99 and 105. Residue Ser155 coordinates substrate. Tyr168, Lys172, Phe201, and Thr203 together coordinate NAD(+). Tyr168 serves as the catalytic Proton acceptor. Position 212 is an N6-acetyllysine; alternate (Lys212). Lys212 bears the N6-succinyllysine; alternate mark.

It belongs to the short-chain dehydrogenases/reductases (SDR) family. In terms of assembly, homotetramer. Component of mitochondrial ribonuclease P, a complex composed of TRMT10C/MRPP1, HSD17B10/MRPP2 and PRORP/MRPP3. Interacts with TRMT10C/MRPP1; forming the MRPP1-MRPP2 subcomplex of the mitochondrial ribonuclease P complex.

Its subcellular location is the mitochondrion. It is found in the mitochondrion matrix. The protein resides in the mitochondrion nucleoid. The enzyme catalyses a (3S)-3-hydroxyacyl-CoA + NAD(+) = a 3-oxoacyl-CoA + NADH + H(+). The catalysed reaction is (2S,3S)-3-hydroxy-2-methylbutanoyl-CoA + NAD(+) = 2-methyl-3-oxobutanoyl-CoA + NADH + H(+). It catalyses the reaction testosterone + NAD(+) = androst-4-ene-3,17-dione + NADH + H(+). It carries out the reaction 5alpha-androstane-3alpha,17beta-diol + NAD(+) = 17beta-hydroxy-5alpha-androstan-3-one + NADH + H(+). The enzyme catalyses 17beta-estradiol + NAD(+) = estrone + NADH + H(+). The catalysed reaction is cholate + NAD(+) = 3alpha,12alpha-dihydroxy-7-oxo-5beta-cholanate + NADH + H(+). It catalyses the reaction (3S)-3-hydroxybutanoyl-CoA + NAD(+) = acetoacetyl-CoA + NADH + H(+). It carries out the reaction (3S)-hydroxyoctanoyl-CoA + NAD(+) = 3-oxooctanoyl-CoA + NADH + H(+). The enzyme catalyses (3S)-hydroxyhexadecanoyl-CoA + NAD(+) = 3-oxohexadecanoyl-CoA + NADH + H(+). The catalysed reaction is 17beta-hydroxy-5alpha-androstan-3-one + NAD(+) = 5alpha-androstan-3,17-dione + NADH + H(+). It catalyses the reaction 5alpha-pregnan-20beta-ol-3-one + NAD(+) = 5alpha-pregnane-3,20-dione + NADH + H(+). It carries out the reaction 3alpha-hydroxy-5alpha-pregnan-20-one + NAD(+) = 5alpha-pregnane-3,20-dione + NADH + H(+). The enzyme catalyses cortisone + NAD(+) = 17alpha-hydroxypregn-4-en-3,11,20-trione-21-al + NADH + H(+). The catalysed reaction is 11-dehydrocorticosterone + NAD(+) = pregn-4-ene-3,11,20,21-tetraone + NADH + H(+). It catalyses the reaction cortisol + NAD(+) = 11beta,17alpha-dihydroxypregn-4-ene-3,20,21-trione + NADH + H(+). It carries out the reaction chenodeoxycholate + NAD(+) = 7-oxolithocholate + NADH + H(+). The enzyme catalyses ursodeoxycholate + NAD(+) = 7-oxolithocholate + NADH + H(+). The catalysed reaction is 3beta,7beta-dihydroxy-5beta-cholan-24-oate + NAD(+) = 3beta-hydroxy-7-oxo-5beta-cholan-24-oate + NADH + H(+). It functions in the pathway amino-acid degradation; L-isoleucine degradation. It participates in lipid metabolism; fatty acid beta-oxidation. Its pathway is steroid metabolism. The protein operates within lipid metabolism; bile acid biosynthesis. Functionally, mitochondrial dehydrogenase involved in pathways of fatty acid, branched-chain amino acid and steroid metabolism. Acts as (S)-3-hydroxyacyl-CoA dehydrogenase in mitochondrial fatty acid beta-oxidation, a major degradation pathway of fatty acids. Catalyzes the third step in the beta-oxidation cycle, namely the reversible conversion of (S)-3-hydroxyacyl-CoA to 3-ketoacyl-CoA. Preferentially accepts straight medium- and short-chain acyl-CoA substrates with highest efficiency for (3S)-hydroxybutanoyl-CoA. Acts as 3-hydroxy-2-methylbutyryl-CoA dehydrogenase in branched-chain amino acid catabolic pathway. Catalyzes the oxidation of 3-hydroxy-2-methylbutanoyl-CoA into 2-methyl-3-oxobutanoyl-CoA, a step in isoleucine degradation pathway. Has hydroxysteroid dehydrogenase activity toward steroid hormones and bile acids. Catalyzes the oxidation of 3alpha-, 17beta-, 20beta- and 21-hydroxysteroids and 7alpha- and 7beta-hydroxy bile acids. Oxidizes allopregnanolone/brexanolone at the 3alpha-hydroxyl group, which is known to be critical for the activation of gamma-aminobutyric acid receptors (GABAARs) chloride channel. Has phospholipase C-like activity toward cardiolipin and its oxidized species. Likely oxidizes the 2'-hydroxyl in the head group of cardiolipin to form a ketone intermediate that undergoes nucleophilic attack by water and fragments into diacylglycerol, dihydroxyacetone and orthophosphate. Has higher affinity for cardiolipin with oxidized fatty acids and may degrade these species during the oxidative stress response to protect cells from apoptosis. By interacting with intracellular amyloid-beta, it may contribute to the neuronal dysfunction associated with Alzheimer disease (AD). Essential for structural and functional integrity of mitochondria. In terms of biological role, in addition to mitochondrial dehydrogenase activity, moonlights as a component of mitochondrial ribonuclease P, a complex that cleaves tRNA molecules in their 5'-ends. Together with TRMT10C/MRPP1, forms a subcomplex of the mitochondrial ribonuclease P, named MRPP1-MRPP2 subcomplex, which displays functions that are independent of the ribonuclease P activity. The MRPP1-MRPP2 subcomplex catalyzes the formation of N(1)-methylguanine and N(1)-methyladenine at position 9 (m1G9 and m1A9, respectively) in tRNAs; HSD17B10/MRPP2 acting as a non-catalytic subunit. The MRPP1-MRPP2 subcomplex also acts as a tRNA maturation platform: following 5'-end cleavage by the mitochondrial ribonuclease P complex, the MRPP1-MRPP2 subcomplex enhances the efficiency of 3'-processing catalyzed by ELAC2, retains the tRNA product after ELAC2 processing and presents the nascent tRNA to the mitochondrial CCA tRNA nucleotidyltransferase TRNT1 enzyme. Associates with mitochondrial DNA complexes at the nucleoids to initiate RNA processing and ribosome assembly. The polypeptide is 3-hydroxyacyl-CoA dehydrogenase type-2 (HSD17B10) (Bos taurus (Bovine)).